The chain runs to 101 residues: NADH-quinone oxidoreductase subunit K (101 aa).

A run of 3 helical transmembrane segments spans residues 4–24 (LAHYLVLGAILFAISIVGIFL), 30–50 (IIILMAIELMLLAVNTNFVAF), and 61–81 (IFVFFVLTVAAAEAAIGLAIL).

The protein belongs to the complex I subunit 4L family. In terms of assembly, NDH-1 is composed of 14 different subunits. Subunits NuoA, H, J, K, L, M, N constitute the membrane sector of the complex.

It is found in the cell inner membrane. The enzyme catalyses a quinone + NADH + 5 H(+)(in) = a quinol + NAD(+) + 4 H(+)(out). In terms of biological role, NDH-1 shuttles electrons from NADH, via FMN and iron-sulfur (Fe-S) centers, to quinones in the respiratory chain. The immediate electron acceptor for the enzyme in this species is believed to be ubiquinone. Couples the redox reaction to proton translocation (for every two electrons transferred, four hydrogen ions are translocated across the cytoplasmic membrane), and thus conserves the redox energy in a proton gradient. In Paraburkholderia xenovorans (strain LB400), this protein is NADH-quinone oxidoreductase subunit K.